Consider the following 334-residue polypeptide: S-adenosylmethionine:tRNA ribosyltransferase-isomerase (334 aa).

The protein belongs to the QueA family. Monomer.

The protein resides in the cytoplasm. The enzyme catalyses 7-aminomethyl-7-carbaguanosine(34) in tRNA + S-adenosyl-L-methionine = epoxyqueuosine(34) in tRNA + adenine + L-methionine + 2 H(+). The protein operates within tRNA modification; tRNA-queuosine biosynthesis. In terms of biological role, transfers and isomerizes the ribose moiety from AdoMet to the 7-aminomethyl group of 7-deazaguanine (preQ1-tRNA) to give epoxyqueuosine (oQ-tRNA). The protein is S-adenosylmethionine:tRNA ribosyltransferase-isomerase of Aquifex aeolicus (strain VF5).